The following is an 85-amino-acid chain: ATP synthase subunit 9, mitochondrial (85 aa).

The next 2 membrane-spanning stretches (helical) occupy residues 19-39 (IGAG…GNVF) and 61-81 (ILGF…AFLI).

Belongs to the ATPase C chain family. As to quaternary structure, F-type ATPases have 2 components, CF(1) - the catalytic core - and CF(0) - the membrane proton channel. CF(1) has five subunits: alpha(3), beta(3), gamma(1), delta(1), epsilon(1). CF(0) has three main subunits: a, b and c.

The protein localises to the mitochondrion membrane. Its function is as follows. This protein is one of the chains of the nonenzymatic membrane component (F0) of mitochondrial ATPase. The polypeptide is ATP synthase subunit 9, mitochondrial (ATP9) (Arabidopsis thaliana (Mouse-ear cress)).